Here is a 129-residue protein sequence, read N- to C-terminus: Gas vesicle protein C (129 aa).

3 consecutive repeats follow at residues 19–51 (VTQL…LHQF), 52–84 (HQNL…LHKF), and 85–117 (HQNL…LQQF). The segment at 19–117 (VTQLFRETHE…KAQSQYLQQF (99 aa)) is 3 X 33 AA tandem repeats.

Belongs to the gas vesicle GvpC family.

The protein localises to the gas vesicle. Functionally, confers stability, involved in shaping gas vesicles, hollow, gas filled proteinaceous nanostructures. During planktonic growth they allow positioning of the organism at a favorable depth for light or nutrient acquisition. Its function is as follows. Cluster expression in E.coli (gvpA1-gvpA2-gvpC-gvpN-gvpJ-gvpK-gvpF-gvpG-gvpV-gvpW) allows cells to float and produces irregularly shaped gas vesicles. This Nostoc sp. (strain PCC 7120 / SAG 25.82 / UTEX 2576) protein is Gas vesicle protein C.